A 1125-amino-acid chain; its full sequence is tRNA (34-2'-O)-methyltransferase regulator WDR6 (1125 aa).

An N-acetylmethionine modification is found at Met-1. WD repeat units follow at residues 89–130 (SKGL…GNVA), 155–197 (TDRC…PDNK), 207–246 (GHVGVIFSMSYLESKGLLATASEDRSVRIWKVGDLRVPGG), 256–294 (GHSARVWQVKLLENYLISAGEDCVCLVWSHEGEILQAFR), 295–335 (GHQG…YPGL), 346–384 (SRPGALKAVTLAGSWRVLAVTDVGGLYLYDLEVKCWEQL), 433–475 (LFQG…TGKA), 489–528 (SKQRWHTCSAFLPPGDFLVCGDRRGSVLLFPARPCLFKKP), 567–605 (HGKQGVTSVTCHGGYVYSTGRDGSYYQLFVHGGRLQPVL), 611–650 (RGMNWIAGLRMAPDGSMVVLGFHANEFVVWSPRSHEKLHI), 652–692 (NCGG…IRPN), 725–765 (EHPD…GAAH), 767–798 (LTAVCNHISSVRALAVWGVGTPGGPQDSHPGL), 860–905 (TRYM…RILH), 912–958 (HHKR…DRGS), 982–1024 (AHSC…PELE), and 1047–1085 (AHAAHVTGIKILSPKLMVSASIDQRLTFWRLGNGEPTFM).

This sequence belongs to the WD repeat WDR6 family. Interacts with FTSJ1; the interaction is direct, and required for 2'-O-methylation of position 34 in substrate tRNAs. Interacts with IRS4. Interacts with STK11/LKB1. In terms of tissue distribution, expressed in hypothalamus, hippocampus, cerebrum cortex and cerebellum.

The protein localises to the cytoplasm. Its function is as follows. Together with methyltransferase FTSJ1, methylates the 2'-O-ribose of nucleotides at position 34 of the tRNA anticodon loop of substrate tRNAs. Required for the correct positioning of the substrate tRNA for methylation. Required to suppress amino acid starvation-induced autophagy. Enhances the STK11/LKB1-induced cell growth suppression activity. In Rattus norvegicus (Rat), this protein is tRNA (34-2'-O)-methyltransferase regulator WDR6 (Wdr6).